The sequence spans 127 residues: Small ribosomal subunit protein uS11 (127 aa).

This sequence belongs to the universal ribosomal protein uS11 family. In terms of assembly, part of the 30S ribosomal subunit. Interacts with proteins S7 and S18. Binds to IF-3.

Its function is as follows. Located on the platform of the 30S subunit, it bridges several disparate RNA helices of the 16S rRNA. Forms part of the Shine-Dalgarno cleft in the 70S ribosome. In Rhodopirellula baltica (strain DSM 10527 / NCIMB 13988 / SH1), this protein is Small ribosomal subunit protein uS11.